A 107-amino-acid polypeptide reads, in one-letter code: Subtilisin inhibitor-like protein 3 (107 aa).

2 cysteine pairs are disulfide-bonded: Cys29–Cys44 and Cys65–Cys95.

This sequence belongs to the protease inhibitor I16 (SSI) family. Homodimer.

It localises to the secreted. Its function is as follows. Inhibitor of subtilisin BPN' and trypsin. This is Subtilisin inhibitor-like protein 3 from Streptomyces coelicolor.